A 367-amino-acid polypeptide reads, in one-letter code: MMLTALGLMSGTSLDGVDVALIETDGKQVKAFGPSGYRPYSPVERNLLRQALSEAVHLTRRDARPGILAEAERAVTQAHAEAVAAFVAQNRMRPEDIDIVGFHGQTVLHRPEKRLTVQIGDAPALARAIHIPVMHDFRAADVEAGGQGAPFVPVYHRALAQSLEREGPIVVVNIGGVSNITYIDGNDTLIACDTGPGNALLDDFMYRTMNQAFDTEGKFAALGTADEAWIARALELPFFALPPPKSLDRNDFAALKLGDVPPAVGAATLTAFTAAAIARIIPLLPRRPRSWIVCGGGARNLTMLRMLRERVGSATVEAAEALGWASDAIEAQAFGFLAARGLKGLPLSYPATTGVPMPMTGGVIARP.

G11–D18 is an ATP binding site.

It belongs to the anhydro-N-acetylmuramic acid kinase family.

It carries out the reaction 1,6-anhydro-N-acetyl-beta-muramate + ATP + H2O = N-acetyl-D-muramate 6-phosphate + ADP + H(+). It functions in the pathway amino-sugar metabolism; 1,6-anhydro-N-acetylmuramate degradation. The protein operates within cell wall biogenesis; peptidoglycan recycling. Catalyzes the specific phosphorylation of 1,6-anhydro-N-acetylmuramic acid (anhMurNAc) with the simultaneous cleavage of the 1,6-anhydro ring, generating MurNAc-6-P. Is required for the utilization of anhMurNAc either imported from the medium or derived from its own cell wall murein, and thus plays a role in cell wall recycling. The protein is Anhydro-N-acetylmuramic acid kinase of Bradyrhizobium diazoefficiens (strain JCM 10833 / BCRC 13528 / IAM 13628 / NBRC 14792 / USDA 110).